We begin with the raw amino-acid sequence, 178 residues long: ATP synthase subunit delta (178 aa).

The protein belongs to the ATPase delta chain family. As to quaternary structure, F-type ATPases have 2 components, F(1) - the catalytic core - and F(0) - the membrane proton channel. F(1) has five subunits: alpha(3), beta(3), gamma(1), delta(1), epsilon(1). F(0) has three main subunits: a(1), b(2) and c(10-14). The alpha and beta chains form an alternating ring which encloses part of the gamma chain. F(1) is attached to F(0) by a central stalk formed by the gamma and epsilon chains, while a peripheral stalk is formed by the delta and b chains.

It localises to the cell inner membrane. Its function is as follows. F(1)F(0) ATP synthase produces ATP from ADP in the presence of a proton or sodium gradient. F-type ATPases consist of two structural domains, F(1) containing the extramembraneous catalytic core and F(0) containing the membrane proton channel, linked together by a central stalk and a peripheral stalk. During catalysis, ATP synthesis in the catalytic domain of F(1) is coupled via a rotary mechanism of the central stalk subunits to proton translocation. Functionally, this protein is part of the stalk that links CF(0) to CF(1). It either transmits conformational changes from CF(0) to CF(1) or is implicated in proton conduction. This chain is ATP synthase subunit delta, found in Hahella chejuensis (strain KCTC 2396).